A 188-amino-acid chain; its full sequence is Protease-associated domain-containing protein 1 (188 aa).

An N-terminal signal peptide occupies residues 1-21 (MVPGAAGWCCLVLWLPACVAA). In terms of domain architecture, PA spans 83–163 (IQDQIALVER…RSLEQHGLPW (81 aa)). N171 is a glycosylation site (N-linked (GlcNAc...) asparagine).

Post-translationally, N-glycosylated; required for efficient secretion. In terms of tissue distribution, highly expressed in skeletal muscle, heart and liver. Expressed at intermediate level in kidney.

It localises to the secreted. Its function is as follows. Plays a role in the modulation of physical activity and adiposity. The protein is Protease-associated domain-containing protein 1 of Homo sapiens (Human).